Consider the following 244-residue polypeptide: 1-(5-phosphoribosyl)-5-[(5-phosphoribosylamino)methylideneamino] imidazole-4-carboxamide isomerase (244 aa).

Aspartate 10 acts as the Proton acceptor in catalysis. Catalysis depends on aspartate 132, which acts as the Proton donor.

The protein belongs to the HisA/HisF family.

It is found in the cytoplasm. The enzyme catalyses 1-(5-phospho-beta-D-ribosyl)-5-[(5-phospho-beta-D-ribosylamino)methylideneamino]imidazole-4-carboxamide = 5-[(5-phospho-1-deoxy-D-ribulos-1-ylimino)methylamino]-1-(5-phospho-beta-D-ribosyl)imidazole-4-carboxamide. The protein operates within amino-acid biosynthesis; L-histidine biosynthesis; L-histidine from 5-phospho-alpha-D-ribose 1-diphosphate: step 4/9. In Stenotrophomonas maltophilia (strain K279a), this protein is 1-(5-phosphoribosyl)-5-[(5-phosphoribosylamino)methylideneamino] imidazole-4-carboxamide isomerase.